The chain runs to 272 residues: Insulin-like growth factor-binding protein 5 (272 aa).

The first 20 residues, 1-20 (MVLLTAVLLLLAAYAGPAQS), serve as a signal peptide directing secretion. The IGFBP N-terminal domain maps to 23-103 (SFVHCEPCDE…LHGRGVCLNE (81 aa)). 6 disulfides stabilise this stretch: Cys-27–Cys-53, Cys-30–Cys-55, Cys-38–Cys-56, Cys-45–Cys-59, Cys-67–Cys-80, and Cys-74–Cys-100. Positions 111–122 (KIERDSREHEEP) are enriched in basic and acidic residues. The segment at 111–130 (KIERDSREHEEPTTSEMAEE) is disordered. Ser-116 carries the phosphoserine; by FAM20C modification. Thr-172 carries an O-linked (HexNAc...) threonine glycan. The Thyroglobulin type-1 domain occupies 189 to 263 (QGPCRRHMEA…MEYVDGDFQC (75 aa)). 3 cysteine pairs are disulfide-bonded: Cys-192–Cys-219, Cys-230–Cys-241, and Cys-243–Cys-263.

As to quaternary structure, interacts with IGF1; this interaction enhances the growth stimulatory effects of IGF1 on fibroblasts. Interacts with CAV1; this interaction allows trafficking of IGFBP5 from the plasma membrane to the nucleus. Interacts with NCL; this interaction is necessary for IGFBP5 localization to the nucleus. In terms of processing, cleaved by C1S in extracellular space. In terms of tissue distribution, osteosarcoma, and at lower levels in liver, kidney and brain.

The protein localises to the secreted. Its subcellular location is the cytoplasm. It is found in the nucleus. Functionally, multifunctional protein that plays a critical role in regulating the availability of IGFs to their receptors and thereby regulates IGF-mediated cellular processes including proliferation, differentiation, and apoptosis in a cell-type specific manner. Increases the cell proliferation of osteoblasts, intestinal smooth muscle cells and neuroblastoma cells. Enhances adhesion and survival of epithelial cells but decreases adhesion of mesenchymal cells. Once secreted, acts as a major mediator of mTORC1-dependent feedback inhibition of IGF1 signaling. Also plays a role in the induction of extracellular matrix (ECM) production and deposition independently of its nuclear translocation and binding to IGFs. Acts itself as a growth factor that can act independently of IGFs to regulate bone formation. Acts as a ligand for the ROR1 receptor which triggers formation of ROR1/HER2 heterodimer to enhance CREB oncogenic signaling. The protein is Insulin-like growth factor-binding protein 5 (IGFBP5) of Homo sapiens (Human).